Here is a 263-residue protein sequence, read N- to C-terminus: Gap junction beta-6 protein (263 aa).

Over 1-19 (MDWGALQTILGGVNKHSTS) the chain is Cytoplasmic. The helical transmembrane segment at 20–40 (IGKIWLTVLFIFRIMILVVAA) threads the bilayer. Residues 41–75 (ERVWGDEQDDFICNTLQPGCKNVCYDHFFPISHIR) lie on the Extracellular side of the membrane. Residues 76-96 (LWALQLIFVSTPALLVAMHVA) traverse the membrane as a helical segment. Residues 97–137 (YRRHEKKRQFRKGDQKCEYKDIEEIRTQRFRIEGTLWWTYT) are Cytoplasmic-facing. Residues 138–158 (CSIFFRLVFEAVFMYAFYFMY) form a helical membrane-spanning segment. The Extracellular portion of the chain corresponds to 159 to 189 (DGFRMPRLMKCSAWPCPNTVDCFVSRPTEKT). The helical transmembrane segment at 190–210 (VFTIFMIAVSSICILLNVAEL) threads the bilayer. The Cytoplasmic portion of the chain corresponds to 211-263 (CYLLTKFFLRRSRKAGNQKHHPNHENKEETKQNEMNELISDSCQNTVIGFTSS).

The protein belongs to the connexin family. Beta-type (group I) subfamily. As to quaternary structure, a connexon is composed of a hexamer of connexins. Exclusively expressed in the cochlea of the inner ear, where it is found in cells of the tegmentum vasculosum, cuboidal cells, supporting cells and clear cells.

It localises to the cell membrane. The protein resides in the cell junction. Its subcellular location is the gap junction. Its function is as follows. One gap junction consists of a cluster of closely packed pairs of transmembrane channels, the connexons, through which materials of low MW diffuse from one cell to a neighboring cell. The chain is Gap junction beta-6 protein (GJB6) from Gallus gallus (Chicken).